The primary structure comprises 177 residues: Phosphatidylglycerol/phosphatidylinositol transfer protein (177 aa).

A signal peptide spans 1–17; the sequence is MRLSAAVIALLSTSAAA. Positions 18–30 are excised as a propeptide; it reads FSVYRENSVSAND.

The protein belongs to the NPC2 family. As to quaternary structure, monomer.

Catalyzes the intermembrane transfer of phosphatidylglycerol and phosphatidylinositol. The chain is Phosphatidylglycerol/phosphatidylinositol transfer protein (npc-2) from Neurospora crassa (strain ATCC 24698 / 74-OR23-1A / CBS 708.71 / DSM 1257 / FGSC 987).